The chain runs to 145 residues: D-aminoacyl-tRNA deacylase (145 aa).

The short motif at 137–138 is the Gly-cisPro motif, important for rejection of L-amino acids element; sequence GP.

This sequence belongs to the DTD family. Homodimer.

It is found in the cytoplasm. The catalysed reaction is glycyl-tRNA(Ala) + H2O = tRNA(Ala) + glycine + H(+). It catalyses the reaction a D-aminoacyl-tRNA + H2O = a tRNA + a D-alpha-amino acid + H(+). Its function is as follows. An aminoacyl-tRNA editing enzyme that deacylates mischarged D-aminoacyl-tRNAs. Also deacylates mischarged glycyl-tRNA(Ala), protecting cells against glycine mischarging by AlaRS. Acts via tRNA-based rather than protein-based catalysis; rejects L-amino acids rather than detecting D-amino acids in the active site. By recycling D-aminoacyl-tRNA to D-amino acids and free tRNA molecules, this enzyme counteracts the toxicity associated with the formation of D-aminoacyl-tRNA entities in vivo and helps enforce protein L-homochirality. The chain is D-aminoacyl-tRNA deacylase from Colwellia psychrerythraea (strain 34H / ATCC BAA-681) (Vibrio psychroerythus).